Reading from the N-terminus, the 178-residue chain is Ribosome maturation factor RimP (178 aa).

The protein belongs to the RimP family.

The protein resides in the cytoplasm. Functionally, required for maturation of 30S ribosomal subunits. The polypeptide is Ribosome maturation factor RimP (Corynebacterium glutamicum (strain ATCC 13032 / DSM 20300 / JCM 1318 / BCRC 11384 / CCUG 27702 / LMG 3730 / NBRC 12168 / NCIMB 10025 / NRRL B-2784 / 534)).